Here is a 325-residue protein sequence, read N- to C-terminus: Psp operon transcriptional activator (325 aa).

Positions 15–237 (FLEVLEQVSH…ELKNVVERSV (223 aa)) constitute a Sigma-54 factor interaction domain. Residues 36–43 (GERGTGKE) and 99–108 (ADGGTLFLDE) each bind ATP. A DNA-binding region (H-T-H motif) is located at residues 302-321 (QKRAAELLGLTYHQFRALLK).

As to quaternary structure, forms a complex with PspA, which is composed of around 6 PspF subunits and 6 PspA subunits.

It is found in the cytoplasm. Its activity is regulated as follows. ATPase activity is inhibited by interaction with PspA. Under inducing conditions, the interaction is disrupted, allowing activation of psp transcription. Transcriptional activator for the phage shock protein (psp) operon (pspABCDE) and pspG gene. This is Psp operon transcriptional activator (pspF) from Escherichia coli (strain K12).